The following is a 322-amino-acid chain: Allergen Asp f 4 (322 aa).

The first 20 residues, 1–20, serve as a signal peptide directing secretion; the sequence is MQLKNSMLLLTALAAGSSVA. The span at 80–105 shows a compositional bias: low complexity; it reads AAAAAASTPEPSSSHSDSSSSSGVSA. Residues 80 to 109 are disordered; the sequence is AAAAAASTPEPSSSHSDSSSSSGVSADWTN.

The protein localises to the secreted. The polypeptide is Allergen Asp f 4 (Aspergillus fumigatus (strain ATCC MYA-4609 / CBS 101355 / FGSC A1100 / Af293) (Neosartorya fumigata)).